The sequence spans 181 residues: Regulator of G-protein signaling 10 (181 aa).

The disordered stretch occupies residues 1–35; sequence MFTRAVSRLSRKRPPSDIHDGDGSSSSGHQSLKST. Residues Ser-24 and Ser-41 each carry the phosphoserine modification. Residues 41–156 form the RGS domain; it reads SLENLLEDPE…LKSDLFLKHR (116 aa). Cys-74 carries the S-palmitoyl cysteine lipid modification. Residues 157–181 are disordered; it reads RTEEEEEDPPDAQTAAKRASRIYNT. The residue at position 176 (Ser-176) is a Phosphoserine.

In terms of assembly, interacts with GNAZ, GNAI1 and GNAI3. Associates specifically with the activated, GTP-bound forms of GNAZ and GNAI3.

It localises to the cytoplasm. It is found in the cytosol. Its subcellular location is the nucleus. Functionally, regulates G protein-coupled receptor signaling cascades, including signaling downstream of the muscarinic acetylcholine receptor CHRM2. Inhibits signal transduction by increasing the GTPase activity of G protein alpha subunits, thereby driving them into their inactive GDP-bound form. Modulates the activity of potassium channels that are activated in response to CHRM2 signaling. Activity on GNAZ is inhibited by palmitoylation of the G-protein. The chain is Regulator of G-protein signaling 10 (Rgs10) from Rattus norvegicus (Rat).